A 220-amino-acid polypeptide reads, in one-letter code: Adenylate kinase (220 aa).

Residue 12–17 (GAGKGT) participates in ATP binding. An NMP region spans residues 32-62 (STGDIFRDIVKKENDELGKKIKEIMEKGELV). AMP-binding positions include Thr33, Arg38, 60-62 (ELV), 88-91 (GYPR), and Gln95. An LID region spans residues 129–166 (SRRICPKCGRIYNMISLPPKEDELCDDCKVKLVQRDDD). Position 130 (Arg130) interacts with ATP. 2 residues coordinate Zn(2+): Cys133 and Cys136. 139–140 (IY) provides a ligand contact to ATP. Zn(2+) contacts are provided by Cys153 and Cys156. The AMP site is built by Arg163 and Arg174. Ile202 lines the ATP pocket.

It belongs to the adenylate kinase family. In terms of assembly, monomer.

It localises to the cytoplasm. The enzyme catalyses AMP + ATP = 2 ADP. Its pathway is purine metabolism; AMP biosynthesis via salvage pathway; AMP from ADP: step 1/1. Its function is as follows. Catalyzes the reversible transfer of the terminal phosphate group between ATP and AMP. Plays an important role in cellular energy homeostasis and in adenine nucleotide metabolism. This Thermotoga neapolitana protein is Adenylate kinase.